Consider the following 76-residue polypeptide: Vasotab-TY2 (76 aa).

The N-terminal stretch at 1-21 (MKFALFSVLVLMLIATFVAAD) is a signal peptide. The region spanning 22 to 76 (DCPRICTADYTPVCGTPSGGRRSANRTFANQCGLDSHNCLNKGATYDKLHDGECK) is the Kazal-like domain. 3 disulfides stabilise this stretch: Cys23/Cys60, Cys27/Cys53, and Cys35/Cys75.

In terms of tissue distribution, expressed by the salivary gland.

It is found in the secreted. Functionally, vasodilator protein that inhibits vasoconstriction of isolated rat femoral artery induced by phenylephrine. Since platelet aggregation and vasoconstriction are key hemostatic responses, particularly in small wounds, this protein likely participates in the antihemostatic responses during blood feeding. Blocks L-type calcium channels (Cav1/CACNA1) in left ventricular myocytes isolated from rat hearts. The sequence is that of Vasotab-TY2 from Tabanus yao (Horsefly).